The following is a 72-amino-acid chain: DNA-directed RNA polymerase subunit Rpo10 (72 aa).

Zn(2+)-binding residues include Cys-7, Cys-10, Cys-54, and Cys-55.

The protein belongs to the archaeal Rpo10/eukaryotic RPB10 RNA polymerase subunit family. In terms of assembly, part of the RNA polymerase complex. Requires Zn(2+) as cofactor.

It is found in the cytoplasm. The enzyme catalyses RNA(n) + a ribonucleoside 5'-triphosphate = RNA(n+1) + diphosphate. In terms of biological role, DNA-dependent RNA polymerase (RNAP) catalyzes the transcription of DNA into RNA using the four ribonucleoside triphosphates as substrates. The chain is DNA-directed RNA polymerase subunit Rpo10 from Picrophilus torridus (strain ATCC 700027 / DSM 9790 / JCM 10055 / NBRC 100828 / KAW 2/3).